The chain runs to 446 residues: Na(+)-translocating NADH-quinone reductase subunit A (446 aa).

It belongs to the NqrA family. As to quaternary structure, composed of six subunits; NqrA, NqrB, NqrC, NqrD, NqrE and NqrF.

It carries out the reaction a ubiquinone + n Na(+)(in) + NADH + H(+) = a ubiquinol + n Na(+)(out) + NAD(+). Functionally, NQR complex catalyzes the reduction of ubiquinone-1 to ubiquinol by two successive reactions, coupled with the transport of Na(+) ions from the cytoplasm to the periplasm. NqrA to NqrE are probably involved in the second step, the conversion of ubisemiquinone to ubiquinol. The polypeptide is Na(+)-translocating NADH-quinone reductase subunit A (Vibrio vulnificus (strain CMCP6)).